The primary structure comprises 313 residues: Nucleotide-binding protein Swit_0399 (313 aa).

Residue 20–27 (GMSGSGKK) coordinates ATP. 73–76 (DSRT) contributes to the GTP binding site. Residues 289 to 313 (PTVRHRDLTRQKSNAEESTVPGVGS) are disordered. A compositionally biased stretch (basic and acidic residues) spans 292–303 (RHRDLTRQKSNA).

The protein belongs to the RapZ-like family.

Functionally, displays ATPase and GTPase activities. The protein is Nucleotide-binding protein Swit_0399 of Rhizorhabdus wittichii (strain DSM 6014 / CCUG 31198 / JCM 15750 / NBRC 105917 / EY 4224 / RW1) (Sphingomonas wittichii).